The following is a 519-amino-acid chain: Sorting nexin-2 (519 aa).

Disordered regions lie at residues 1-20 (MAAE…DFEE) and 30-103 (STVS…VTPV). Composition is skewed to low complexity over residues 30–44 (STVS…SPDP) and 93–103 (SSETSPAVTPV). Ser97 carries the post-translational modification Phosphoserine. Thr101 and Thr104 each carry phosphothreonine. Residues Ser117 and Ser119 each carry the phosphoserine modification. Residues 140-269 (FDIEIGVSDP…QFLESSELPR (130 aa)) form the PX domain. A 1,2-diacyl-sn-glycero-3-phospho-(1D-myo-inositol-3-phosphate) contacts are provided by Arg183, Ser185, Lys211, and Arg235. The residue at position 185 (Ser185) is a Phosphoserine. The segment at 260–519 (QFLESSELPR…AFLPEAKAIA (260 aa)) is interaction with RhoG. Ser277 carries the post-translational modification Phosphoserine. The interval 278–295 (GAGILRMVNKAADAVNKM) is membrane-binding amphipathic helix. One can recognise a BAR domain in the interval 299–519 (MNESDAWFEE…AFLPEAKAIA (221 aa)). Lys469 carries the post-translational modification N6-acetyllysine.

This sequence belongs to the sorting nexin family. Predominantly forms heterodimers with BAR domain-containing sorting nexins SNX5, SNX6 and SNX32; can self-associate to form homodimers. The heterodimers are proposed to self-assemble into helical arrays on the membrane to stabilize and expand local membrane curvature underlying endosomal tubule formation. Thought to be a component of the originally described retromer complex (also called SNX-BAR retromer) which is a pentamer containing the heterotrimeric retromer cargo-selective complex (CSC), also decribed as vacuolar protein sorting subcomplex (VPS) and a heterodimeric membrane-deforming subcomplex formed between SNX1 or SNX2 and SNX5 or SNX6 (also called SNX-BAR subcomplex); the respective CSC and SNX-BAR subcomplexes associate with low affinity. Interacts with SNX5, SNX6, SNX32, VPS26A, VPS29, VPS35, FNBP1, KALRN, RHOG (GDP-bound form).

It localises to the early endosome membrane. The protein localises to the cell projection. Its subcellular location is the lamellipodium. Involved in several stages of intracellular trafficking. Interacts with membranes containing phosphatidylinositol 3-phosphate (PtdIns(3P)) or phosphatidylinositol 3,5-bisphosphate (PtdIns(3,5)P2). Acts in part as component of the retromer membrane-deforming SNX-BAR subcomplex. The SNX-BAR retromer mediates retrograde transport of cargo proteins from endosomes to the trans-Golgi network (TGN) and is involved in endosome-to-plasma membrane transport for cargo protein recycling. The SNX-BAR subcomplex functions to deform the donor membrane into a tubular profile called endosome-to-TGN transport carrier (ETC). Can sense membrane curvature and has in vitro vesicle-to-membrane remodeling activity. Required for retrograde endosome-to-TGN transport of TGN38. Promotes KALRN- and RHOG-dependent but retromer-independent membrane remodeling such as lamellipodium formation; the function is dependent on GEF activity of KALRN. The chain is Sorting nexin-2 (SNX2) from Bos taurus (Bovine).